The chain runs to 162 residues: Caveolin-2 (162 aa).

The Cytoplasmic portion of the chain corresponds to 1–86 (MGLETEKADV…FEISKYVVYK (86 aa)). Y19 carries the phosphotyrosine; by SRC modification. 2 positions are modified to phosphoserine: S20 and S23. Y27 is subject to Phosphotyrosine; by SRC. Phosphoserine is present on S36. Positions 87-107 (FLTVFLAIPLAFAAGILFATL) form an intramembrane region, helical. Residues 108 to 162 (SCLHIWIIMPFVKTCLMVLPSVQTVWKTVTDVVIAPLCASVGRSFSSVSLQLSHD) lie on the Cytoplasmic side of the membrane.

The protein belongs to the caveolin family. In terms of assembly, monomer or homodimer. Interacts with CAV1; the interaction forms a stable heterooligomeric complex that is required for targeting to lipid rafts and for caveolae formation. Tyrosine phosphorylated forms do not form heterooligomers with the Tyr-19-phosphorylated form existing as a monomer or dimer, and the Tyr-27-form as a monomer only. Interacts (tyrosine phosphorylated form) with the SH2 domain-containing proteins, RASA1, NCK1 and SRC. Interacts (tyrosine phosphorylated form) with INSR, the interaction (Tyr-27-phosphorylated form) is increased on insulin stimulation. Interacts (Tyr-19 phosphorylated form) with MAPK1 (phosphorylated form); the interaction, promoted by insulin, leads to nuclear location and MAPK1 activation. Interacts with STAT3; the interaction is increased on insulin-induced tyrosine phosphorylation leading to STAT activation. Phosphorylated on serine and tyrosine residues. CAV1 promotes phosphorylation on Ser-23 which then targets the complex to the plasma membrane, lipid rafts and caveolae. Phosphorylation on Ser-36 appears to modulate mitosis in endothelial cells. Phosphorylation on both Tyr-19 and Tyr-27 is required for insulin-induced 'Ser-727' phosphorylation of STAT3 and its activation. Phosphorylation on Tyr-19 is required for insulin-induced phosphorylation of MAPK1 and DNA binding of STAT3. Tyrosine phosphorylation is induced by both EGF and insulin (By. similarity).

It is found in the nucleus. The protein resides in the cytoplasm. It localises to the golgi apparatus membrane. Its subcellular location is the cell membrane. The protein localises to the membrane. It is found in the caveola. Functionally, may act as a scaffolding protein within caveolar membranes. Interacts directly with G-protein alpha subunits and can functionally regulate their activity. Acts as an accessory protein in conjunction with CAV1 in targeting to lipid rafts and driving caveolae formation. The Ser-36 phosphorylated form has a role in modulating mitosis in endothelial cells. Positive regulator of cellular mitogenesis of the MAPK signaling pathway. Required for the insulin-stimulated nuclear translocation and activation of MAPK1 and STAT3, and the subsequent regulation of cell cycle progression. This is Caveolin-2 (CAV2) from Loxodonta africana (African elephant).